The sequence spans 952 residues: MEVRRGDTCPRPHPSGLREEGLEPKVAFPGGANRCWNLGADAGSRLTDVFGSVMLTGSASFYDCYTSQSEDNVDLRQTYTPFSSTEYSSSVDSSLFCAPWSTYGDDIKQPSNSQISIKNRIQTERNDYGSETDLYGLVSNILEEQDKSQPYFAEGTCSSNLKSVWPMNTSRFADHHDLLTETKRPIDTVISQQAFYSDESVSAMEKQYLRNSNLTPQQKIDELHHGFTGLDLEEQWMYPSRSDHSNCHNIQTNDTAKTTFQEYPLIKNCFTPQTGLSDIMKESGVDIYHYGRDRICTKGLEAPLQQKRAEMFLSQFNRYNENVDYCRYPEYVHPNKAKLNKCSNFSVQDSKKLANGTPETPTVEADTYTKLFQVKPANQKKMEETIPDQQNFTFPKTTPHLTEKQFAKEAVFTADFGLTSEYGLKPHTACPANDFANVTEKQQFAKPDPPHSEYFKSVNLLSNSATSSGGINLNRPTWMNVQTKNNTPIPYRNQGNLMKLNSHLSAASKGSNHSSDFPQLSSTNLTPNSNLFQKYCQENPSAFSSFDFSYSGAERIQSVNHIEGLTKPGEENLFKLVTDKKIKQPNGFCDNYSAQKYGIIENVNKHNFQAKPQSGHYDPEEGPKHLDGLSQNTYQDLLESQGHSNSHRTRGGDNSRVNRTQVSCFSNNYMMGDLRHNQCFQQLGSNGFPLRSTHPFGHSVVPLLDSYDLLSYDDLSHLYPYFNMMYGDNSFSGLMPTFGFQRPIKTRSGPASELHIRLEECCEQWRALEKERKKTELALAKNYPGKKVSSTNNTPVPRLTSNPSRVDRLIVDELRELARVVTLLGKMERLRSSLLHASISTALDRHLESIHIVQSRRKDEIVNASNRQRQGVPRCQDDRDVFALASAIKEMCVATRKTRTALWCALQMTLPKTASTADVVKPLQDTVNCEDKVHESINSSNPMNQRGETNKH.

Disordered regions lie at residues 1–23, 609–629, and 933–952; these read MEVRRGDTCPRPHPSGLREEGLE, QAKPQSGHYDPEEGPKHLDGL, and VHESINSSNPMNQRGETNKH. Positions 617–627 are enriched in basic and acidic residues; it reads YDPEEGPKHLD. Over residues 936–952 the composition is skewed to polar residues; the sequence is SINSSNPMNQRGETNKH.

As to quaternary structure, interacts with YTHDC2; binds transcript that regulate the mitotic cell cycle inhibiting progression into metaphase, thereby allowing meiotic prophase to proceed normally. Interacts with RBM46. In terms of tissue distribution, expressed in fetal ovaries. Expressed in testis.

The protein localises to the cytoplasm. It localises to the nucleus. Its function is as follows. Is required for meiosis completion in both male and female germ cells. Confers stability to numerous meiotic mRNAs in gonads allowing proper initiation and progression into meiosis prophase I. The function may involve YTHDC2 and is independent of induction by retinoic acid (RA). Maintains an extended meiotic prophase I by properly promoting the transition from a mitotic to a meiotic cell cycle program by binding transcripts through its interaction with YTHDC2 that regulate the mitotic cell cycle. This is Meiosis-specific coiled-coil domain-containing protein MEIOC from Homo sapiens (Human).